A 350-amino-acid polypeptide reads, in one-letter code: Dauer larva development regulatory growth factor daf-7 (350 aa).

Positions 1 to 21 (MFMASSLPVFIFLLSLPHGLT) are cleaved as a signal peptide. Residues 22-234 (FNCTNSGVCI…TRPKGSRKRR (213 aa)) constitute a propeptide that is removed on maturation. N23 carries N-linked (GlcNAc...) asparagine glycosylation. 4 cysteine pairs are disulfide-bonded: C241/C251, C250/C315, C278/C347, and C282/C349.

This sequence belongs to the TGF-beta family. Expressed in the chemosensory neurons, including in the ASJ neurons in males. Expressed in the ASI neurons.

It localises to the secreted. Its function is as follows. Under harsh environmental conditions, larvae enter a developmentally arrested state known as dauer; TGF-beta-like daf-7 acts to inhibit dauer larva formation and promote growth. May be a ligand to cell surface receptor daf-4. May act as a negative regulator of dauer larva development by transducing chemosensory information from ASI neurons. Involved in sensitivity to CO2 levels. Involved in mate searching behavior of males, acting in concert with the neuropeptide pdf-1. In AWC neurons, acts to promote expression of srsx-3, a member of the GPCR family. The chain is Dauer larva development regulatory growth factor daf-7 from Caenorhabditis elegans.